A 362-amino-acid polypeptide reads, in one-letter code: Alpha-tubulin N-acetyltransferase (362 aa).

An N-acetyltransferase domain is found at 1 to 177; it reads MQFGCNVAEA…NNFLMLDASI (177 aa). Acetyl-CoA contacts are provided by residues 111–124 and 147–156; these read FYTHETVQRRGIGT and SPKLLAFLSK.

Belongs to the acetyltransferase ATAT1 family.

The enzyme catalyses L-lysyl-[alpha-tubulin] + acetyl-CoA = N(6)-acetyl-L-lysyl-[alpha-tubulin] + CoA + H(+). Its function is as follows. Specifically acetylates 'Lys-40' in alpha-tubulin on the lumenal side of microtubules. Promotes microtubule destabilization and accelerates microtubule dynamics; this activity may be independent of acetylation activity. Acetylates alpha-tubulin with a slow enzymatic rate, due to a catalytic site that is not optimized for acetyl transfer. Enters the microtubule through each end and diffuses quickly throughout the lumen of microtubules. Acetylates only long/old microtubules because of its slow acetylation rate since it does not have time to act on dynamically unstable microtubules before the enzyme is released. This Giardia intestinalis (strain ATCC 50803 / WB clone C6) (Giardia lamblia) protein is Alpha-tubulin N-acetyltransferase.